The chain runs to 173 residues: Translation initiation factor IF-3 (173 aa).

This sequence belongs to the IF-3 family. Monomer.

It is found in the cytoplasm. In terms of biological role, IF-3 binds to the 30S ribosomal subunit and shifts the equilibrium between 70S ribosomes and their 50S and 30S subunits in favor of the free subunits, thus enhancing the availability of 30S subunits on which protein synthesis initiation begins. This is Translation initiation factor IF-3 from Phenylobacterium zucineum (strain HLK1).